The primary structure comprises 204 residues: MKFSSALVLSAVAATALAESITTTITATKNGHVYTKTVTQDATFVWGGEDSYASSTSAAESSAAETSAAETSAAATTSAAATTSAAETSSAAETSSADEGSGSSITTTITATKNGHVYTKTVTQDATFVWTGEGSSNTWSPSSTSTSSEAATSSASTTATTTAETSSSATSSSTAELSSYTGAADAITAGTGLMGAALAAVMLL.

Residues 1-18 (MKFSSALVLSAVAATALA) form the signal peptide. Disordered regions lie at residues 84-104 (SAAE…SGSS) and 133-175 (EGSS…SSTA). Residues 135 to 175 (SSNTWSPSSTSTSSEAATSSASTTATTTAETSSSATSSSTA) are compositionally biased toward low complexity. Gly-182 is lipidated: GPI-anchor amidated glycine. The propeptide at 183–204 (AADAITAGTGLMGAALAAVMLL) is removed in mature form.

Post-translationally, the GPI-anchor is attached to the protein in the endoplasmic reticulum and serves to target the protein to the cell surface. There, the glucosamine-inositol phospholipid moiety is cleaved off and the GPI-modified mannoprotein is covalently attached via its lipidless GPI glycan remnant to the 1,6-beta-glucan of the outer cell wall layer.

Its subcellular location is the secreted. The protein localises to the cell wall. It localises to the membrane. Involved in the uptake of non-siderophore and siderophore sources of iron. Has a role in the retention of iron in the cell wall and periplasmic space. In Saccharomyces cerevisiae (strain ATCC 204508 / S288c) (Baker's yeast), this protein is Facilitator of iron transport 3 (FIT3).